Consider the following 237-residue polypeptide: MLLQPACSPSVFPRPSAAPSAMHGSQKDTTFTKIFVGGLPYHTTDASLRKYFEGFGDIEEAVVITDRQTGKSRGYGFVTMADRAAADRACKDPNPIIDGRKANVNLAYLGAKPRSLQTGFAVGVQQLHPTLIQRTYGLTPHYIYPPAIVQPSVVIPATPVPSLSSPYLEYTPASPAYAQYPPATYDQYPYAASPAAATSFVGYGYPAAVPQALSAAAPAGTTFVQYQAPQLQPDRMQ.

A disordered region spans residues 1–24 (MLLQPACSPSVFPRPSAAPSAMHG). One can recognise an RRM domain in the interval 32–109 (TKIFVGGLPY…RKANVNLAYL (78 aa)).

This sequence belongs to the RBM38 family. In terms of tissue distribution, expressed in cardiac and skeletal muscle tissues.

It is found in the cytoplasm. Its subcellular location is the cytosol. It localises to the nucleus. Functionally, RNA-binding protein that specifically bind the 3'-UTR of CDKN1A transcripts, leading to maintain the stability of CDKN1A transcripts, thereby acting as a mediator of the p53/TP53 family to regulate CDKN1A. CDKN1A is a cyclin-dependent kinase inhibitor transcriptionally regulated by the p53/TP53 family to induce cell cycle arrest. Has the ability to induce cell cycle arrest in G1 and maintain the stability of CDKN1A transcripts induced by p53/TP53. Also acts as a mRNA splicing factor. Specifically regulates the expression of FGFR2-IIIb, an epithelial cell-specific isoform of FGFR2. Plays a role in myogenic differentiation. In Mus musculus (Mouse), this protein is RNA-binding protein 38 (Rbm38).